We begin with the raw amino-acid sequence, 323 residues long: MIDFGNFYSLIAKNHLSHWLETLPAQIANWQREQQHGLFKQWSNAVEFLPEIKPYHLDLLHSVTAESEEPLSAGQIKRIETLMRNLMPWRKGPFSLYGVNIDTEWRSDWKWDRVLPHLSDLTGRTILDVGCGSGYHMWRMIGAGAHLAVGIDPTQLFLCQFEAVRKLLGNDQRAHLLPLGIEQLPALKAFDTVFSMGVLYHRRSPLEHLWQLKDQLVNEGELVLETLVIDGDENTVLVPGDRYAQMRNVYFIPSALALKNWLKKCGFVDIRIADVSVTTTEEQRRTEWMVTESLADFLDPHDPGKTVEGYPAPKRAVLIARKP.

Carboxy-S-adenosyl-L-methionine is bound by residues K91, W105, K110, G130, 152 to 154, 181 to 182, M196, Y200, and R315; these read DPT and IE.

The protein belongs to the class I-like SAM-binding methyltransferase superfamily. CmoB family. As to quaternary structure, homotetramer.

The catalysed reaction is carboxy-S-adenosyl-L-methionine + 5-hydroxyuridine(34) in tRNA = 5-carboxymethoxyuridine(34) in tRNA + S-adenosyl-L-homocysteine + H(+). Functionally, catalyzes carboxymethyl transfer from carboxy-S-adenosyl-L-methionine (Cx-SAM) to 5-hydroxyuridine (ho5U) to form 5-carboxymethoxyuridine (cmo5U) at position 34 in tRNAs. This Escherichia coli O81 (strain ED1a) protein is tRNA U34 carboxymethyltransferase.